A 435-amino-acid polypeptide reads, in one-letter code: Eukaryotic translation initiation factor 3 subunit E (435 aa).

The region spanning 219 to 392 is the PCI domain; the sequence is FFNHPKGRDL…GHVVMGTQPL (174 aa).

This sequence belongs to the eIF-3 subunit E family. In terms of assembly, component of the eukaryotic translation initiation factor 3 (eIF-3) complex. The eIF-3 complex interacts with pix. Interacts with mxt.

The protein localises to the cytoplasm. In terms of biological role, component of the eukaryotic translation initiation factor 3 (eIF-3) complex, which is involved in protein synthesis of a specialized repertoire of mRNAs and, together with other initiation factors, stimulates binding of mRNA and methionyl-tRNAi to the 40S ribosome. The eIF-3 complex specifically targets and initiates translation of a subset of mRNAs involved in cell proliferation. The sequence is that of Eukaryotic translation initiation factor 3 subunit E (eIF3-S6) from Drosophila erecta (Fruit fly).